We begin with the raw amino-acid sequence, 78 residues long: Acyl carrier protein (78 aa).

The Carrier domain maps to 2–77 (SDIAERVKKI…DAIKYIGENM (76 aa)). At Ser37 the chain carries O-(pantetheine 4'-phosphoryl)serine.

It belongs to the acyl carrier protein (ACP) family. Post-translationally, 4'-phosphopantetheine is transferred from CoA to a specific serine of apo-ACP by AcpS. This modification is essential for activity because fatty acids are bound in thioester linkage to the sulfhydryl of the prosthetic group.

The protein localises to the cytoplasm. It participates in lipid metabolism; fatty acid biosynthesis. In terms of biological role, carrier of the growing fatty acid chain in fatty acid biosynthesis. The protein is Acyl carrier protein of Magnetococcus marinus (strain ATCC BAA-1437 / JCM 17883 / MC-1).